Consider the following 382-residue polypeptide: U11/U12 small nuclear ribonucleoprotein 59 kDa protein (382 aa).

The stretch at 31–63 forms a coiled coil; that stretch reads NTKNITDQLKQLQDTLNLAKSMEKELEALKMIK. The segment at 274–297 is disordered; the sequence is SEENTTLTTSNKTNNDTDKDSNTN. The segment covering 277-287 has biased composition (low complexity); that stretch reads NTTLTTSNKTN.

Component of the U11/U12 snRNPs that are part of the U12-type spliceosome.

It localises to the nucleus. In Arabidopsis thaliana (Mouse-ear cress), this protein is U11/U12 small nuclear ribonucleoprotein 59 kDa protein (SNRNP59).